A 96-amino-acid polypeptide reads, in one-letter code: Small ribosomal subunit protein bS20 (96 aa).

Belongs to the bacterial ribosomal protein bS20 family.

Its function is as follows. Binds directly to 16S ribosomal RNA. The sequence is that of Small ribosomal subunit protein bS20 from Thermotoga petrophila (strain ATCC BAA-488 / DSM 13995 / JCM 10881 / RKU-1).